A 136-amino-acid chain; its full sequence is Protein NrdI (136 aa).

Belongs to the NrdI family.

Its function is as follows. Probably involved in ribonucleotide reductase function. This is Protein NrdI from Salmonella paratyphi A (strain ATCC 9150 / SARB42).